Here is an 848-residue protein sequence, read N- to C-terminus: Adenylate cyclase (848 aa).

A catalytic region spans residues 1–535; that stretch reads MYLYIETLKQ…DVSHHFPLRL (535 aa). Residues 541 to 848 are regulatory; that stretch reads KALYSPCEIR…DAPLLQQYFS (308 aa). His-609 carries the phosphohistidine; by CRR modification.

Belongs to the adenylyl cyclase class-1 family.

The protein resides in the cytoplasm. It catalyses the reaction ATP = 3',5'-cyclic AMP + diphosphate. This Salmonella typhi protein is Adenylate cyclase (cyaA).